Reading from the N-terminus, the 765-residue chain is Putative ankyrin repeat protein L371 (765 aa).

ANK repeat units follow at residues 60–89 (NGNY…RLDV), 93–122 (EGNS…KIIG), 132–161 (KGSV…NANY), 165–194 (DNVN…NLNA), 198–227 (QGST…DQNI), 232–261 (LDFY…NPNH), 265–295 (EGNT…RCRS), 322–353 (DGLT…NLNY), and 357–395 (TGNT…GKTV).

In Acanthamoeba polyphaga mimivirus (APMV), this protein is Putative ankyrin repeat protein L371.